Here is a 96-residue protein sequence, read N- to C-terminus: Small ribosomal subunit protein bS6 (96 aa).

It belongs to the bacterial ribosomal protein bS6 family.

In terms of biological role, binds together with bS18 to 16S ribosomal RNA. The chain is Small ribosomal subunit protein bS6 from Mycobacteroides abscessus (strain ATCC 19977 / DSM 44196 / CCUG 20993 / CIP 104536 / JCM 13569 / NCTC 13031 / TMC 1543 / L948) (Mycobacterium abscessus).